The sequence spans 282 residues: Bifunctional protein FolD (282 aa).

NADP(+) is bound by residues 164 to 166 (GAS), Ile-189, and Ile-230.

This sequence belongs to the tetrahydrofolate dehydrogenase/cyclohydrolase family. As to quaternary structure, homodimer.

It catalyses the reaction (6R)-5,10-methylene-5,6,7,8-tetrahydrofolate + NADP(+) = (6R)-5,10-methenyltetrahydrofolate + NADPH. The catalysed reaction is (6R)-5,10-methenyltetrahydrofolate + H2O = (6R)-10-formyltetrahydrofolate + H(+). Its pathway is one-carbon metabolism; tetrahydrofolate interconversion. Catalyzes the oxidation of 5,10-methylenetetrahydrofolate to 5,10-methenyltetrahydrofolate and then the hydrolysis of 5,10-methenyltetrahydrofolate to 10-formyltetrahydrofolate. This is Bifunctional protein FolD from Campylobacter jejuni subsp. jejuni serotype O:2 (strain ATCC 700819 / NCTC 11168).